A 184-amino-acid polypeptide reads, in one-letter code: Late embryogenesis abundant protein (184 aa).

The tract at residues T49–P184 is disordered. Positions P60 to G86 are enriched in low complexity. 2 stretches are compositionally biased toward basic and acidic residues: residues Q87–R98 and K122–Q138. Low complexity predominate over residues T139–A159. Residues D160–P177 show a composition bias toward basic and acidic residues.

This sequence belongs to the plant dehydrin family.

LEA protein are late embryogenesis abundant in higher plant seed embryos. There are two subsets of LEA proteins (5a, and 5b), the first ones are expressed when the cotyledon weight reach 80 mg and the second set are expressed above 100 mg. The function of those proteins is not known. This is Late embryogenesis abundant protein from Raphanus sativus (Radish).